Here is a 376-residue protein sequence, read N- to C-terminus: ORC1-type DNA replication protein 2 (376 aa).

ATP contacts are provided by residues 73 to 77 (TGKTS), Y209, and R221.

Belongs to the CDC6/cdc18 family.

In terms of biological role, involved in regulation of DNA replication. The polypeptide is ORC1-type DNA replication protein 2 (cdc6-2) (Archaeoglobus fulgidus (strain ATCC 49558 / DSM 4304 / JCM 9628 / NBRC 100126 / VC-16)).